A 405-amino-acid chain; its full sequence is Tryptophan synthase beta chain (405 aa).

N6-(pyridoxal phosphate)lysine is present on Lys-98.

It belongs to the TrpB family. As to quaternary structure, tetramer of two alpha and two beta chains. Requires pyridoxal 5'-phosphate as cofactor.

The enzyme catalyses (1S,2R)-1-C-(indol-3-yl)glycerol 3-phosphate + L-serine = D-glyceraldehyde 3-phosphate + L-tryptophan + H2O. Its pathway is amino-acid biosynthesis; L-tryptophan biosynthesis; L-tryptophan from chorismate: step 5/5. Functionally, the beta subunit is responsible for the synthesis of L-tryptophan from indole and L-serine. The protein is Tryptophan synthase beta chain of Stenotrophomonas maltophilia (strain R551-3).